The sequence spans 158 residues: UPF0145 protein Psyc_1853 (158 aa).

Polar residues predominate over residues I113–S122. The segment at I113–E158 is disordered.

This sequence belongs to the UPF0145 family.

In Psychrobacter arcticus (strain DSM 17307 / VKM B-2377 / 273-4), this protein is UPF0145 protein Psyc_1853.